The following is a 652-amino-acid chain: DNA ligase (652 aa).

NAD(+) contacts are provided by residues 29 to 33 (DAEYD), 78 to 79 (SL), and Glu-107. Lys-109 (N6-AMP-lysine intermediate) is an active-site residue. 4 residues coordinate NAD(+): Arg-130, Glu-164, Lys-278, and Lys-302. Zn(2+)-binding residues include Cys-395, Cys-398, Cys-413, and Cys-418. The region spanning 577–652 (DENAALSGMT…IKDEAWLESL (76 aa)) is the BRCT domain.

This sequence belongs to the NAD-dependent DNA ligase family. LigA subfamily. It depends on Mg(2+) as a cofactor. The cofactor is Mn(2+).

The enzyme catalyses NAD(+) + (deoxyribonucleotide)n-3'-hydroxyl + 5'-phospho-(deoxyribonucleotide)m = (deoxyribonucleotide)n+m + AMP + beta-nicotinamide D-nucleotide.. Its function is as follows. DNA ligase that catalyzes the formation of phosphodiester linkages between 5'-phosphoryl and 3'-hydroxyl groups in double-stranded DNA using NAD as a coenzyme and as the energy source for the reaction. It is essential for DNA replication and repair of damaged DNA. In Streptococcus suis (strain 98HAH33), this protein is DNA ligase.